We begin with the raw amino-acid sequence, 183 residues long: Putative 3-methyladenine DNA glycosylase (183 aa).

The protein belongs to the DNA glycosylase MPG family.

In Legionella pneumophila (strain Lens), this protein is Putative 3-methyladenine DNA glycosylase.